The chain runs to 115 residues: DNA-binding protein PYRAB09250 (115 aa).

This sequence belongs to the PDCD5 family.

The polypeptide is DNA-binding protein PYRAB09250 (Pyrococcus abyssi (strain GE5 / Orsay)).